Consider the following 256-residue polypeptide: Large ribosomal subunit protein eL8A (256 aa).

Positions 1 to 37 (MAPGKKVAPAPFGAKSTKSNKTRNPLTHSTPKNFGIG) are disordered. The segment covering 16 to 32 (STKSNKTRNPLTHSTPK) has biased composition (polar residues).

It belongs to the eukaryotic ribosomal protein eL8 family. In terms of assembly, component of the large ribosomal subunit (LSU). Mature yeast ribosomes consist of a small (40S) and a large (60S) subunit. The 40S small subunit contains 1 molecule of ribosomal RNA (18S rRNA) and 33 different proteins (encoded by 57 genes). The large 60S subunit contains 3 rRNA molecules (25S, 5.8S and 5S rRNA) and 46 different proteins (encoded by 81 genes).

It is found in the cytoplasm. Its function is as follows. Component of the ribosome, a large ribonucleoprotein complex responsible for the synthesis of proteins in the cell. The small ribosomal subunit (SSU) binds messenger RNAs (mRNAs) and translates the encoded message by selecting cognate aminoacyl-transfer RNA (tRNA) molecules. The large subunit (LSU) contains the ribosomal catalytic site termed the peptidyl transferase center (PTC), which catalyzes the formation of peptide bonds, thereby polymerizing the amino acids delivered by tRNAs into a polypeptide chain. The nascent polypeptides leave the ribosome through a tunnel in the LSU and interact with protein factors that function in enzymatic processing, targeting, and the membrane insertion of nascent chains at the exit of the ribosomal tunnel. The chain is Large ribosomal subunit protein eL8A from Saccharomyces cerevisiae (strain ATCC 204508 / S288c) (Baker's yeast).